Here is a 335-residue protein sequence, read N- to C-terminus: Beta-hexosaminidase (335 aa).

Substrate contacts are provided by residues Asp-60, Arg-68, Arg-133, and 163–164 (KH). The active-site Proton donor/acceptor is His-176. Catalysis depends on Asp-247, which acts as the Nucleophile.

This sequence belongs to the glycosyl hydrolase 3 family. NagZ subfamily.

It is found in the cytoplasm. It catalyses the reaction Hydrolysis of terminal non-reducing N-acetyl-D-hexosamine residues in N-acetyl-beta-D-hexosaminides.. The protein operates within cell wall biogenesis; peptidoglycan recycling. Plays a role in peptidoglycan recycling by cleaving the terminal beta-1,4-linked N-acetylglucosamine (GlcNAc) from peptide-linked peptidoglycan fragments, giving rise to free GlcNAc, anhydro-N-acetylmuramic acid and anhydro-N-acetylmuramic acid-linked peptides. In Xylella fastidiosa (strain M12), this protein is Beta-hexosaminidase.